The chain runs to 515 residues: G-protein coupled receptor 176 (515 aa).

The Extracellular portion of the chain corresponds to 1 to 41; sequence MGHNSSWVSPNTSHPRNTSGAEAGANLSAFGELSEAQLYRQ. N4, N11, N17, and N26 each carry an N-linked (GlcNAc...) asparagine glycan. The chain crosses the membrane as a helical span at residues 42 to 64; that stretch reads FTTTVQVVIFIGSLLGNFMVLWS. Residues 65-77 are Cytoplasmic-facing; it reads TCRTTVFKSVTNR. The helical transmembrane segment at 78–98 threads the bilayer; that stretch reads FIKNLACSGICASVVCVPFDI. The Extracellular segment spans residues 99–108; that stretch reads ILSSSPHCCW. The helical transmembrane segment at 109–129 threads the bilayer; it reads WIYTMLFCKVLKFLHKVFCSV. Residues 130–157 lie on the Cytoplasmic side of the membrane; sequence TVLSFPAIALDRYYSVLYPLERKISDAK. A helical membrane pass occupies residues 158–177; sequence SRELVMYIWAHAVVASVPVF. Over 178 to 204 the chain is Extracellular; it reads AVTNVADIYAMSTCTEVWSNSLGHLVY. The chain crosses the membrane as a helical span at residues 205-225; that stretch reads VLIYNVTTVIVPVAVVFLFLI. At 226–264 the chain is on the cytoplasmic side; it reads LIRRALSASQKKKVIIAALRTPQNTISIPYASQREAELH. A helical membrane pass occupies residues 265-285; it reads ATLLSMVTVFILCSVPYATLV. Residues 286–301 lie on the Extracellular side of the membrane; that stretch reads VYQTVLNVPNTSVFLL. The chain crosses the membrane as a helical span at residues 302–322; it reads LTAIWLPKVSLLANPVLFLTV. At 323 to 515 the chain is on the cytoplasmic side; that stretch reads NKSVRKCLVG…KVSIFPKVDS (193 aa). The interval 407–435 is disordered; that stretch reads SCPEGEQEPPQLAPSVPPPGTVDSEPRVS. Positions 417–426 are enriched in pro residues; sequence QLAPSVPPPG.

The protein belongs to the G-protein coupled receptor 1 family. In terms of tissue distribution, expressed mainly in the brain, with prominent expression in the SCN (at protein level).

It localises to the cell membrane. Orphan receptor involved in normal circadian rhythm behavior. Acts through the G-protein subclass G(z)-alpha and has an agonist-independent basal activity to repress cAMP production. The polypeptide is G-protein coupled receptor 176 (Gpr176) (Mus musculus (Mouse)).